Reading from the N-terminus, the 236-residue chain is MDEQIFIQLLENNLTNSKSYVTQPIILEFKTDVFLIINQILKQYKKGKIIKNNTNEIILEIDNKLISITNLDINKFHSYQIVNINENKNIYNERNSLILFDLVNYIIEKNQNSIRHINFWTIQMSVVNWIYFITYNFNNSYLIDPNWKKYVFKIKKDESKGVISTNLLHNYGFVDFVVQSKSQNFLKAYRVQDEILKSVLNLGDNLNNEFLEEIMRKYDTYKIIDRDHKYLVINIE.

This is an uncharacterized protein from Ureaplasma parvum serovar 3 (strain ATCC 700970).